The primary structure comprises 506 residues: ATP synthase subunit alpha, chloroplastic (506 aa).

An ATP-binding site is contributed by 170-177 (GDRQTGKT).

This sequence belongs to the ATPase alpha/beta chains family. As to quaternary structure, F-type ATPases have 2 components, CF(1) - the catalytic core - and CF(0) - the membrane proton channel. CF(1) has five subunits: alpha(3), beta(3), gamma(1), delta(1), epsilon(1). CF(0) has four main subunits: a, b, b' and c.

It localises to the plastid. Its subcellular location is the chloroplast thylakoid membrane. The catalysed reaction is ATP + H2O + 4 H(+)(in) = ADP + phosphate + 5 H(+)(out). Functionally, produces ATP from ADP in the presence of a proton gradient across the membrane. The alpha chain is a regulatory subunit. The chain is ATP synthase subunit alpha, chloroplastic from Euglena gracilis.